A 3032-amino-acid chain; its full sequence is MDQANYPNEPIVVVGSGCRFPGGVNTPSKLWELLKEPRDVQTKIPKERFDVDTFYSPDGTHPGRTNAPFAYLLQEDLRGFDASFFNIQAGEAETIDPQQRLLLETVYEAVSNAGLRIQGLQGSSTAVYVGMMTHDYETIVTRELDSIPTYSATGVAVSVASNRVSYFFDWHGPSMTIDTACSSSLAAVHLAVQQLRTGESTMAVAAGANLILGPMTFVMESKLNMLSPNGRSRMWDAAADGYARGEGVCSIVLKTLSQALRDGDSIECVIRETGINQDGRTTGITMPNHSAQEALIRATYAKAGLDITNPQERCQFFEAHGTGTPAGDPQEAEAIATAFFGHKDGTIDSDGEKDELFVGSIKTVLGHTEGTAGIAGLMKASFAVRNGVIPPNLLFEKISPRVAPFYTHLKIATEATEWPIVAPGQPRRVSVNSFGFGGTNAHAIIEEYMAPPHKPTAVVTEVTSDADACSLPLVLSSKSQRSMKATLENMLQFLETHDDVDMHDIAYTLLEKRSILPFRRAIAAHNKEVARAALEAAIADGEVVTDFRTDANDNPRVLGVFTGQGAQWPGMLKKLMVGMPFVRGILEELDNSLQTLPEKYRPTWTLYDQLMLEGDASNVRLASFSQPLCCAVQIVLVRLLAAAGIEFSAIVGHSSGEIACAFAAGFISATQAIRIAHLRGVVSAEHASSPSGQTGAMLAAGMSYDDAKELCELEAFEGRVCVAASNSPDSVTFSGDMDAIQHVEGVLEDESTFARILRVDKAYHSHHMHPCAAPYVKALLECDCAVADGQGNDSVAWFSAVHETSKQMTVQDVMPAYWKDNLVSPVLFSQAVQKAVITHRLIDVAIEIGAHPALKGPCLATIKDALAGVELPYTGCLARNVDDVDAFAGGLGYIWERFGVRSIDAEGFVQQVRPDRAVQNLSKSLPTYSWDHTRQYWAESRSTRQHLRGGAPHLLLGKLSSYSTASTFQWTNFIRPRDLEWLDGHALQGQTVFPAAGYIIMAMEAAMKVAGERAAQVQLLEILDMSINKAIVFEDENTSVELNLTAEVTSDNDADGQVTVKFVIDSCLAKESELSTSAKGQIVITLGEASPSSQLLPPPEEEYPQMNNVNIDFFYRELDLLGYDYSKDFRRLQTMRRADSKASGTLAFLPLKDELRNEPLLLHPAPLDIAFQTVIGAYSSPGDRRLRSLYVPTHVDRVTLIPSLCISAGNSGETELAFDTINTHDKGDFLSGDITVYDSTKTTLFQVDNIVFKPFSPPTASTDHRIFAKWVWGPLTPEKLLEDPATLIIARDKEDILTIERIVYFYIKSFLAQITPDDRQNADLHSQKYIEWCDQVQADARAGHHQWYQESWEEDTSVHIEQMCESNSSHPHVRLIQRVGKELISIVRGNGDPLDIMNRDGLFTEYYTNKLAFGSAIHVVQDLVSQIAHRYQSIDILEIGLGTGIATKRVLASPQLGFNSYTCTDISADVIGKAREQLSEFDGLMQFEALDINRSPAEQGFKPHSYDLIIASDVLHASSNFEEKLAHIRSLLKPGGHLVTFGVTHREPARLAFISGLFADRWTGEDETRALSASGSVDQWEHTLKRVGFSGVDSRTLDREDDLIPSVFSTHAVDATVERLYDPLSAPLKDSYPPLVVIGGESTKTERILNDMKAALPHRHIHSVKRLESVLDDPALQPKSTFVILSELDDEVFCNLEEDKFEAVKSLLFYAGRMMWLTENAWIDHPHQASTIGMLRTIKLENPDLGTHVFDVDTVENLDTKFFVEQLLRFEESDDQLLESITWTHEPEVYWCKGRAWVPRLKQDIARNDRMNSSRRPIFGNFNSSKTAIALKEARGASSSMYYLESTETCDSLEDARHAGKATVRVRYALPQAIRVGHLGYFHVVQGSILENTCEVPVVALAEKNGSILHVPRNYMHSLPDNMAEGEDSSFLLSTAAALLAETILSSAQSFGSDASILIMEPPIFCVKAILESAKTYGVQVHLATTLSDVKTIPAPWIRLHAKETDARLKHSLPTNMMAFFDLSTDRTAAGITNRLAKLLPPSCFMYSGDYLIRSTASTYKVSHVEDIPILEHSVAMAKNTVSASTVDDTEKVITATQILLPGQLSVNHNDQRFNLATVIDWKENEVSARICPIDSGNLFSNKKTYLLVGLTGDLGRSLCRWMILHGARHVVLTSRNPRLDPKWIANMEALGGDITVLSMDVANEDSVDAGLGKLVDMKLPPVAGIAFGPLVLQDVMLKNMDHQMMDMVLKPKVQGARILHERFSEQTGSKALDFFIMFSSIVAVIGNPGQSNYGAANAYLQALAQQRCARGLAGSTIDIGAVYGVGFVTRAEMEEDFDAIRFMFDSVEEHELHTLFAEAVVSDQRARQQPQRKTVIDMADLELTTGIPDLDPALQDRIIYFNDPRFGNFKIPGQRGDGGDNGSGSKGSIADQLKQATTLDQVRQIVIDGLSEKLRVTLQVSDGESVDPTIPLIDQGVDSLGAVTVGSWFSKQLYLDLPLLRVLGGASVADLADDAATRLPATSIPLLLQIGDSTGTSDSGASPTPTDSHDEASSATSTDASSAEEDEEQEDDNEQGGRKILRRERLSLGQEYSWRQQQMVKDHTIFNNTIGMFMKGTIDLDRLRRALKASLRRHEIFRTCFVTGDDYSSDLNGPVQVVLKNPENRVHFVQVNNAAEAEEEYRKLEKTNYSISTGDTLRLVDFYWGTDDHLLVIGYHRLVGDGSTTENLFNEIGQIYSGVKMQRPSTQFSDLAVQQRENLENGRMGDDIAFWKSMHSKVSSSAPTVLPIMNLINDPAANSEQQQIQPFTWQQYEAIARLDPMVAFRIKERSRKHKATPMQFYLAAYHVLLARLTGSKDITIGLAETNRSTMEEISAMGFFANVLPLRFDEFVGSKTFGEHLVATKDSVREAMQHARVPYGVILDCLGLNLPTSGEEPKTQTHAPLFQAVFDYKQGQAESGSIGNAKMTSVLASRERTPYDIVLEMWDDPTKDPLIHVKLQSSLYGPEHAQAFVDHFSSILTMFSMNPALKLA.

Positions 8–447 constitute a Ketosynthase family 3 (KS3) domain; the sequence is NEPIVVVGSG…GTNAHAIIEE (440 aa). Catalysis depends on for beta-ketoacyl synthase activity residues C181, H320, and H367. An acyl and malonyl transferase region spans residues 560 to 901; that stretch reads VFTGQGAQWP…GYIWERFGVR (342 aa). S654 acts as the For malonyltransferase activity in catalysis. The N-terminal hotdog fold stretch occupies residues 953-1089; it reads HLLLGKLSSY…GQIVITLGEA (137 aa). The PKS/mFAS DH domain occupies 953-1261; sequence HLLLGKLSSY…FKPFSPPTAS (309 aa). H985 acts as the Proton acceptor; for dehydratase activity in catalysis. The interval 985–997 is dehydratase-like; sequence HALQGQTVFPAAG. The interval 1106-1261 is C-terminal hotdog fold; the sequence is MNNVNIDFFY…FKPFSPPTAS (156 aa). Catalysis depends on D1168, which acts as the Proton donor; for dehydratase activity. The segment at 1506–1544 is methyltransferase; it reads YDLIIASDVLHASSNFEEKLAHIRSLLKPGGHLVTFGVT. The Carrier domain occupies 2441–2520; sequence DQVRQIVIDG…DLADDAATRL (80 aa). S2480 is modified (O-(pantetheine 4'-phosphoryl)serine). The interval 2531–2580 is disordered; sequence IGDSTGTSDSGASPTPTDSHDEASSATSTDASSAEEDEEQEDDNEQGGRK. The span at 2532–2547 shows a compositional bias: low complexity; that stretch reads GDSTGTSDSGASPTPT. Acidic residues predominate over residues 2563 to 2575; it reads SAEEDEEQEDDNE. The segment at 2586 to 2946 is peptide synthetase elongation; the sequence is RLSLGQEYSW…PKTQTHAPLF (361 aa).

Requires pantetheine 4'-phosphate as cofactor.

It catalyses the reaction holo-[compactin nonaketide synthase] + 9 malonyl-CoA + 11 NADPH + 20 H(+) = dihydro-ML-236C-[compactin nonaketide synthase] + 9 CO2 + 11 NADP(+) + 9 CoA + 6 H2O. Its pathway is polyketide biosynthesis. Functionally, nonaketide synthase; part of the gene cluster that mediates the biosynthesis of compactin, also known as mevastatin or ML-236B, and which acts as a potent competitive inhibitor of HMG-CoA reductase. Compactin biosynthesis is performed in two stages. The first stage is catalyzed by the nonaketide synthase mlcA, which belongs to type I polyketide synthases and catalyzes the iterative nine-step formation of the polyketide. This PKS stage is completed by the action of dehydrogenase mlcG, which catalyzes the NADPH-dependent reduction of the unsaturated tetra-, penta- and heptaketide intermediates that arise during the mlcA-mediated biosynthesis of the nonaketide chain and leads to dihydro-ML-236C carboxylate. Covalently bound dihydro-ML-236C carboxylate is released from mlcA by the mlcF esterase. Conversion of dihydro-ML-236C carboxylate into ML-236A carboxylate is subsequently performed with the participation of molecular oxygen and P450 monoogygenase mlcC. Finally, mlcH performs the conversion of ML-236A carboxylate to ML-236B/compactin carboxylate through the addition of the side-chain diketide moiety produced by the diketide synthase mlcB. The polypeptide is Compactin nonaketide synthase, polyketide synthase component (Penicillium citrinum).